The following is a 495-amino-acid chain: Probable lysine-specific demethylase 4A (495 aa).

The region spanning 18 to 60 (IMTFRPSYEEFQNFSAYIEYIESRGAHLAGLAKIQPPAEWVPR) is the JmjN domain. 2-oxoglutarate is bound at residue tyrosine 139. Residues 149-315 (DEDLDVWNIG…YGKRASICRC (167 aa)) form the JmjC domain. Residues histidine 195 and glutamate 197 each contribute to the Fe cation site. Residues asparagine 205 and lysine 213 each contribute to the 2-oxoglutarate site. Residues cysteine 241 and histidine 247 each coordinate Zn(2+). A 2-oxoglutarate-binding site is contributed by lysine 248. A Fe cation-binding site is contributed by histidine 283. Residues cysteine 313 and cysteine 315 each coordinate Zn(2+). Position 409 is a phosphoserine (serine 409).

This sequence belongs to the JHDM3 histone demethylase family. It depends on Fe(2+) as a cofactor.

The protein localises to the nucleus. The catalysed reaction is N(6),N(6),N(6)-trimethyl-L-lysyl(9)-[histone H3] + 2 2-oxoglutarate + 2 O2 = N(6)-methyl-L-lysyl(9)-[histone H3] + 2 formaldehyde + 2 succinate + 2 CO2. It catalyses the reaction N(6),N(6),N(6)-trimethyl-L-lysyl(36)-[histone H3] + 2 2-oxoglutarate + 2 O2 = N(6)-methyl-L-lysyl(36)-[histone H3] + 2 formaldehyde + 2 succinate + 2 CO2. Probable histone demethylase that specifically demethylates 'Lys-9' and 'Lys-36' residues of histone H3, thereby playing a central role in histone code. Demethylation of Lys residue generates formaldehyde and succinate. The chain is Probable lysine-specific demethylase 4A (Kdm4A) from Drosophila melanogaster (Fruit fly).